A 223-amino-acid chain; its full sequence is Thiamine-phosphate synthase (223 aa).

4-amino-2-methyl-5-(diphosphooxymethyl)pyrimidine contacts are provided by residues 42 to 46 (QLRDK) and N83. Residues D84 and D103 each contribute to the Mg(2+) site. A 4-amino-2-methyl-5-(diphosphooxymethyl)pyrimidine-binding site is contributed by S122. Residue 148–150 (TPT) participates in 2-[(2R,5Z)-2-carboxy-4-methylthiazol-5(2H)-ylidene]ethyl phosphate binding. Position 151 (K151) interacts with 4-amino-2-methyl-5-(diphosphooxymethyl)pyrimidine. G179 contributes to the 2-[(2R,5Z)-2-carboxy-4-methylthiazol-5(2H)-ylidene]ethyl phosphate binding site.

This sequence belongs to the thiamine-phosphate synthase family. It depends on Mg(2+) as a cofactor.

It carries out the reaction 2-[(2R,5Z)-2-carboxy-4-methylthiazol-5(2H)-ylidene]ethyl phosphate + 4-amino-2-methyl-5-(diphosphooxymethyl)pyrimidine + 2 H(+) = thiamine phosphate + CO2 + diphosphate. It catalyses the reaction 2-(2-carboxy-4-methylthiazol-5-yl)ethyl phosphate + 4-amino-2-methyl-5-(diphosphooxymethyl)pyrimidine + 2 H(+) = thiamine phosphate + CO2 + diphosphate. The enzyme catalyses 4-methyl-5-(2-phosphooxyethyl)-thiazole + 4-amino-2-methyl-5-(diphosphooxymethyl)pyrimidine + H(+) = thiamine phosphate + diphosphate. The protein operates within cofactor biosynthesis; thiamine diphosphate biosynthesis; thiamine phosphate from 4-amino-2-methyl-5-diphosphomethylpyrimidine and 4-methyl-5-(2-phosphoethyl)-thiazole: step 1/1. Functionally, condenses 4-methyl-5-(beta-hydroxyethyl)thiazole monophosphate (THZ-P) and 2-methyl-4-amino-5-hydroxymethyl pyrimidine pyrophosphate (HMP-PP) to form thiamine monophosphate (TMP). In Mycolicibacterium paratuberculosis (strain ATCC BAA-968 / K-10) (Mycobacterium paratuberculosis), this protein is Thiamine-phosphate synthase.